A 1040-amino-acid polypeptide reads, in one-letter code: Neprilysin-4 (1040 aa).

The segment at 1 to 27 (MSRHSQLKLAMPSVHGAPATAPGSPMN) is disordered. Positions 1–45 (MSRHSQLKLAMPSVHGAPATAPGSPMNAKARSVKLGLGVNQRTGR) are required for maintaining muscle integrity. Over 1–55 (MSRHSQLKLAMPSVHGAPATAPGSPMNAKARSVKLGLGVNQRTGRVQWCPGLTCC) the chain is Cytoplasmic. The chain crosses the membrane as a helical; Signal-anchor for type II membrane protein span at residues 56–76 (KMLLLLPVVMLPLTLVLILIM). Residues 77-1040 (RLDGMLAALQ…MNPQKKCSVW (964 aa)) are Extracellular-facing. A Peptidase M13 domain is found at 251–1040 (EEGTREGIRM…MNPQKKCSVW (790 aa)). Disulfide bonds link C277–C1025, C285–C985, C452–C700, and C909–C1037. N-linked (GlcNAc...) asparagine glycosylation is found at N387, N593, N723, and N819. Residue H872 coordinates Zn(2+). E873 is an active-site residue. Position 876 (H876) interacts with Zn(2+). Residue N916 is glycosylated (N-linked (GlcNAc...) asparagine). Residue E934 participates in Zn(2+) binding. The active-site Proton donor is D938. A glycan (N-linked (GlcNAc...) asparagine) is linked at N969.

It belongs to the peptidase M13 family. Interacts (via intracellular domain) with the putative carbohydrate kinase CG3534. Zn(2+) serves as cofactor. Expressed in the gonads and testes of adults, and the adult and larval brain (at protein level). In embryos, expressed in the pericardial, muscle founder and glia cells (at protein level). In stage 12 embryos, expressed in specific dorsal muscle founder cells such as DA1 and DO2, and also in the certain pericardial progenitor cells where expression persists throughout embryogenesis. Expressed in the glia cells of the embryonic, larval and adult central nervous system. Expressed in the somatic muscles of larvae, pupae and adults. Isoform A: Detected in the male abdomen (at protein level). Isoform B: Not detected in the male or female abdomen (at protein level).

It localises to the cell membrane. Its subcellular location is the sarcoplasmic reticulum. The protein localises to the cytoplasm. It catalyses the reaction Preferential cleavage of polypeptides between hydrophobic residues, particularly with Phe or Tyr at P1'.. Its function is as follows. Metalloendoprotease which cleaves peptides at the amino side of hydrophobic residues - such as the hormones Akh and Dh31, and the neuropeptides Allatostatins (AST1, AST2, AST3 and AST4), Crz, Drosulfakinins (DSK-I and DSK-II), Lk, sNPF and the tachykinin peptides TK-1, TK-2, TK-4 and TK-5. Functions in female fertility, memory formation and may also act in regulating insulin signaling and food intake. Likely to be involved in controlling feeding behavior and the expression of insulin-like peptides by cleaving various regulatory peptides that include certain Drosulfakinins, Allatostatins and tachykinin peptides. Required in females for normal patterns of egg laying and hatching. Required in the dorsal paired medial neurons for the proper formation of long-term (LTM) and middle-term memories (MTM). Also required in the mushroom body neurons where it functions redundantly with neprilysins Nep2 and Nep3, in normal LTM formation. Cleaves angiotensin-1 and tachykinin neuropeptide substance P. Functions in maintaining muscle integrity, possibly independently of its endopeptidase activity. The polypeptide is Neprilysin-4 (Drosophila melanogaster (Fruit fly)).